The following is a 161-amino-acid chain: 2-C-methyl-D-erythritol 2,4-cyclodiphosphate synthase (161 aa).

A divalent metal cation is bound by residues D10 and H12. 4-CDP-2-C-methyl-D-erythritol 2-phosphate-binding positions include 10–12 (DVH) and 36–37 (HS). Residue H44 participates in a divalent metal cation binding. 4-CDP-2-C-methyl-D-erythritol 2-phosphate contacts are provided by residues 58–60 (DIG), 134–137 (TTTE), F141, and R144.

This sequence belongs to the IspF family. As to quaternary structure, homotrimer. Requires a divalent metal cation as cofactor.

It catalyses the reaction 4-CDP-2-C-methyl-D-erythritol 2-phosphate = 2-C-methyl-D-erythritol 2,4-cyclic diphosphate + CMP. It participates in isoprenoid biosynthesis; isopentenyl diphosphate biosynthesis via DXP pathway; isopentenyl diphosphate from 1-deoxy-D-xylulose 5-phosphate: step 4/6. Its function is as follows. Involved in the biosynthesis of isopentenyl diphosphate (IPP) and dimethylallyl diphosphate (DMAPP), two major building blocks of isoprenoid compounds. Catalyzes the conversion of 4-diphosphocytidyl-2-C-methyl-D-erythritol 2-phosphate (CDP-ME2P) to 2-C-methyl-D-erythritol 2,4-cyclodiphosphate (ME-CPP) with a corresponding release of cytidine 5-monophosphate (CMP). The sequence is that of 2-C-methyl-D-erythritol 2,4-cyclodiphosphate synthase from Parabacteroides distasonis (strain ATCC 8503 / DSM 20701 / CIP 104284 / JCM 5825 / NCTC 11152).